The following is a 736-amino-acid chain: Oxysterol-binding protein-related protein 9 (736 aa).

Alanine 2 bears the N-acetylalanine mark. The PH domain maps to 2–99 (ASIMEGPLSK…WIHALEETIL (98 aa)). Residues 231 to 367 (KSEQRPSSLP…DRDDDAEAGS (137 aa)) are disordered. A compositionally biased stretch (low complexity) spans 253–290 (TPTPNSTGSGHSPPSSSLTSPSHVNLSPNTVPEFSYSS). 5 positions are modified to phosphoserine: serine 306, serine 324, serine 325, serine 326, and serine 329. Composition is skewed to polar residues over residues 314-329 (SSGS…SGNS) and 336-347 (TESLNSSLSNGT). A Phosphoserine modification is found at serine 611.

It belongs to the OSBP family. In terms of assembly, heterodimer with OSBPL11. Interacts with OSBPL10. In terms of tissue distribution, widely expressed.

It is found in the late endosome membrane. It localises to the golgi apparatus. The protein resides in the trans-Golgi network membrane. The catalysed reaction is a 1,2-diacyl-sn-glycero-3-phospho-(1D-myo-inositol 4-phosphate)(out) + a 1,2-diacyl-sn-glycero-3-phospho-L-serine(in) = a 1,2-diacyl-sn-glycero-3-phospho-(1D-myo-inositol 4-phosphate)(in) + a 1,2-diacyl-sn-glycero-3-phospho-L-serine(out). Functionally, interacts with OSBPL11 to function as lipid transfer proteins. Together they form a heterodimer that localizes at the ER-trans-Golgi membrane contact sites, and exchanges phosphatidylserine (1,2-diacyl-sn-glycero-3-phospho-L-serine, PS) for phosphatidylinositol-4-phosphate (1,2-diacyl-sn-glycero-3-phospho-(1D-myo-inositol 4-phosphate), PI(4)P) between the two organelles, a step that is critical for sphingomyelin synthesis in the Golgi complex. In Homo sapiens (Human), this protein is Oxysterol-binding protein-related protein 9 (OSBPL9).